We begin with the raw amino-acid sequence, 103 residues long: Large ribosomal subunit protein bL21 (103 aa).

The protein belongs to the bacterial ribosomal protein bL21 family. In terms of assembly, part of the 50S ribosomal subunit. Contacts protein L20.

Functionally, this protein binds to 23S rRNA in the presence of protein L20. This Beijerinckia indica subsp. indica (strain ATCC 9039 / DSM 1715 / NCIMB 8712) protein is Large ribosomal subunit protein bL21.